We begin with the raw amino-acid sequence, 84 residues long: Small ribosomal subunit protein eS27 (84 aa).

Positions 1–16 (MPLAKDLLHPSPEEEK) are enriched in basic and acidic residues. The tract at residues 1-23 (MPLAKDLLHPSPEEEKRKHKKKR) is disordered. A Phosphoserine modification is found at S11. The C4-type zinc finger occupies 38-60 (PGCYKITTVFSHAQTVVLCVGCS).

It belongs to the eukaryotic ribosomal protein eS27 family. Component of the small ribosomal subunit. Part of the small subunit (SSU) processome, composed of more than 70 proteins and the RNA chaperone small nucleolar RNA (snoRNA) U3. The cofactor is Zn(2+).

It is found in the cytoplasm. The protein localises to the nucleus. The protein resides in the nucleolus. In terms of biological role, component of the small ribosomal subunit. The ribosome is a large ribonucleoprotein complex responsible for the synthesis of proteins in the cell. Required for proper rRNA processing and maturation of 18S rRNAs. Part of the small subunit (SSU) processome, first precursor of the small eukaryotic ribosomal subunit. During the assembly of the SSU processome in the nucleolus, many ribosome biogenesis factors, an RNA chaperone and ribosomal proteins associate with the nascent pre-rRNA and work in concert to generate RNA folding, modifications, rearrangements and cleavage as well as targeted degradation of pre-ribosomal RNA by the RNA exosome. The polypeptide is Small ribosomal subunit protein eS27 (Mus musculus (Mouse)).